We begin with the raw amino-acid sequence, 326 residues long: MAFTPFPPRQPTASARLPLTLMTLDDWALATITGADSEKYMQGQVTADVSQMTEDQHLLAAHCDAKGKMWSNLRLFRDGDGFAWIERRSVREPQLTELKKYAVFSKVTIAPDDERVLLGVAGFQARAALANLFSELPSREKQVVKEGATTLLWFEHPAERFLIVIDEATANMLTDKLRGEAELNNSQQWLALNIEAGFPVIDAANSGQFIPQATNLQALGGISFKKGCYTGQEMVARAKFRGANKRALWLLKGSASRLPEAGEDLELKMGENWRRTGTVLAAVKLEDGQVVVQVVMNNDMEPDSIFRVRDDANTLRIEPLPYSLEE.

Folate contacts are provided by Trp27 and Trp189.

The protein belongs to the tRNA-modifying YgfZ family.

It is found in the cytoplasm. Functionally, folate-binding protein involved in regulating the level of ATP-DnaA and in the modification of some tRNAs. It is probably a key factor in regulatory networks that act via tRNA modification, such as initiation of chromosomal replication. This is tRNA-modifying protein YgfZ from Escherichia coli O127:H6 (strain E2348/69 / EPEC).